Consider the following 1084-residue polypeptide: Ribonucleoside-diphosphate reductase NrdEB subunit alpha (1084 aa).

Substrate-binding positions include Thr-152, 168-169 (SC), and Gly-197. Cys-169 and Cys-793 are joined by a disulfide. The Proton acceptor role is filled by Asn-379. The active-site Cysteine radical intermediate is Cys-381. The DOD-type homing endonuclease domain maps to 503-654 (IMGIIAGDGT…VQKLLLNMGV (152 aa)). Catalysis depends on Glu-768, which acts as the Proton acceptor. Substrate is bound at residue 964–968 (PTGSI).

This sequence belongs to the ribonucleoside diphosphate reductase large chain family. Tetramer of two alpha and two beta subunits. In terms of processing, this protein undergoes protein self-splicing that involves post-translational excision of the intervening region (intein) followed by peptide ligation.

The enzyme catalyses a 2'-deoxyribonucleoside 5'-diphosphate + [thioredoxin]-disulfide + H2O = a ribonucleoside 5'-diphosphate + [thioredoxin]-dithiol. Its activity is regulated as follows. Under complex allosteric control mediated by deoxynucleoside triphosphates and ATP binding. The type of nucleotide bound at the specificity site determines substrate preference. It seems probable that ATP makes the enzyme reduce CDP and UDP, dGTP favors ADP reduction and dTTP favors GDP reduction. In terms of biological role, provides the precursors necessary for DNA synthesis. Catalyzes the biosynthesis of deoxyribonucleotides from the corresponding ribonucleotides. This is Ribonucleoside-diphosphate reductase NrdEB subunit alpha (nrdEB) from Bacillus subtilis (strain 168).